Here is a 133-residue protein sequence, read N- to C-terminus: MAKEYSRTSRVSQQVQKELARILQQEVKDPRIGMVTISGVDVTRDLAYAKVFVTFLTVGDQTNDESLEGLNAAAGYIRRLLGKAMRLRIVPEVRFCFDSTLTEGLRISELVSGAVKADKTKLAASGRTEEDED.

This sequence belongs to the RbfA family. As to quaternary structure, monomer. Binds 30S ribosomal subunits, but not 50S ribosomal subunits or 70S ribosomes.

The protein localises to the cytoplasm. Functionally, one of several proteins that assist in the late maturation steps of the functional core of the 30S ribosomal subunit. Associates with free 30S ribosomal subunits (but not with 30S subunits that are part of 70S ribosomes or polysomes). Required for efficient processing of 16S rRNA. May interact with the 5'-terminal helix region of 16S rRNA. This is Ribosome-binding factor A from Psychromonas ingrahamii (strain DSM 17664 / CCUG 51855 / 37).